We begin with the raw amino-acid sequence, 179 residues long: Adenine phosphoribosyltransferase (179 aa).

The protein belongs to the purine/pyrimidine phosphoribosyltransferase family. As to quaternary structure, homodimer.

The protein localises to the cytoplasm. The enzyme catalyses AMP + diphosphate = 5-phospho-alpha-D-ribose 1-diphosphate + adenine. The protein operates within purine metabolism; AMP biosynthesis via salvage pathway; AMP from adenine: step 1/1. In terms of biological role, catalyzes a salvage reaction resulting in the formation of AMP, that is energically less costly than de novo synthesis. In Nitrobacter winogradskyi (strain ATCC 25391 / DSM 10237 / CIP 104748 / NCIMB 11846 / Nb-255), this protein is Adenine phosphoribosyltransferase.